The sequence spans 372 residues: MLSQEVLKKLEAIEQRFEELTALLSDPSVASNGDRFRKVSKERASLEPTVEALRAYRKLVTDIGDNEALLEEKDPDLREMAKEELAQLRPQVDPAEEQLKLYLVPKDPADEKDVILEIRAGAGGDEAGLFAAELLRMYLRYAERRGWRTEVADTSAGNLGGVKDVTVNIAGDSVYSWLKFESGVHRVQRVPATEAQGRIHTSTVTVAVMPEAEDIDIQVSPADIEMDVFRSTGSGGQSVNTTDSAVRLTHKPTGIIVKCQQEKSQLKNRNMAMRMLRAKLYEIELERQRSARDAARKSQVGTGDRSEKIRTYNFPQDRLTDHRINYTRHNLPAVMDGDVQDVIDACRTFYAAQALREASRGNAADGAAERRA.

Glutamine 237 carries the N5-methylglutamine modification.

It belongs to the prokaryotic/mitochondrial release factor family. Methylated by PrmC. Methylation increases the termination efficiency of RF1.

The protein localises to the cytoplasm. Peptide chain release factor 1 directs the termination of translation in response to the peptide chain termination codons UAG and UAA. This Anaeromyxobacter sp. (strain Fw109-5) protein is Peptide chain release factor 1.